Reading from the N-terminus, the 324-residue chain is Ribose-phosphate pyrophosphokinase 1 (324 aa).

ATP is bound by residues 39–41 (DGE) and 98–99 (RQ). The Mg(2+) site is built by His-132 and Asp-174. Lys-197 is an active-site residue. Residues Arg-199, Asp-223, and 227–231 (DTAGT) each bind D-ribose 5-phosphate.

It belongs to the ribose-phosphate pyrophosphokinase family. Class I subfamily. Homohexamer. The cofactor is Mg(2+).

Its subcellular location is the cytoplasm. The catalysed reaction is D-ribose 5-phosphate + ATP = 5-phospho-alpha-D-ribose 1-diphosphate + AMP + H(+). It functions in the pathway metabolic intermediate biosynthesis; 5-phospho-alpha-D-ribose 1-diphosphate biosynthesis; 5-phospho-alpha-D-ribose 1-diphosphate from D-ribose 5-phosphate (route I): step 1/1. Involved in the biosynthesis of the central metabolite phospho-alpha-D-ribosyl-1-pyrophosphate (PRPP) via the transfer of pyrophosphoryl group from ATP to 1-hydroxyl of ribose-5-phosphate (Rib-5-P). The protein is Ribose-phosphate pyrophosphokinase 1 of Lactococcus lactis subsp. lactis (strain IL1403) (Streptococcus lactis).